The primary structure comprises 362 residues: Phosphoserine aminotransferase (362 aa).

Residues Ser-9 and Arg-42 each coordinate L-glutamate. Residues 76–77 (GR), Trp-102, Thr-153, Asp-174, and Gln-197 contribute to the pyridoxal 5'-phosphate site. Position 198 is an N6-(pyridoxal phosphate)lysine (Lys-198). Residue 239–240 (NT) participates in pyridoxal 5'-phosphate binding.

Belongs to the class-V pyridoxal-phosphate-dependent aminotransferase family. SerC subfamily. As to quaternary structure, homodimer. It depends on pyridoxal 5'-phosphate as a cofactor.

It is found in the cytoplasm. The catalysed reaction is O-phospho-L-serine + 2-oxoglutarate = 3-phosphooxypyruvate + L-glutamate. It carries out the reaction 4-(phosphooxy)-L-threonine + 2-oxoglutarate = (R)-3-hydroxy-2-oxo-4-phosphooxybutanoate + L-glutamate. The protein operates within amino-acid biosynthesis; L-serine biosynthesis; L-serine from 3-phospho-D-glycerate: step 2/3. It functions in the pathway cofactor biosynthesis; pyridoxine 5'-phosphate biosynthesis; pyridoxine 5'-phosphate from D-erythrose 4-phosphate: step 3/5. Functionally, catalyzes the reversible conversion of 3-phosphohydroxypyruvate to phosphoserine and of 3-hydroxy-2-oxo-4-phosphonooxybutanoate to phosphohydroxythreonine. This is Phosphoserine aminotransferase from Escherichia coli (strain ATCC 8739 / DSM 1576 / NBRC 3972 / NCIMB 8545 / WDCM 00012 / Crooks).